The chain runs to 115 residues: DNA-binding protein PH1060 (115 aa).

The protein belongs to the PDCD5 family.

This Pyrococcus horikoshii (strain ATCC 700860 / DSM 12428 / JCM 9974 / NBRC 100139 / OT-3) protein is DNA-binding protein PH1060.